The primary structure comprises 291 residues: Kynurenine formamidase (291 aa).

Positions H33–W37 match the HGGXW motif. The active-site Nucleophile is the S107. Active-site residues include D242 and H280.

The protein belongs to the kynurenine formamidase family. In terms of assembly, homodimer.

The catalysed reaction is N-formyl-L-kynurenine + H2O = L-kynurenine + formate + H(+). Its pathway is amino-acid degradation; L-tryptophan degradation via kynurenine pathway; L-kynurenine from L-tryptophan: step 2/2. Functionally, catalyzes the hydrolysis of N-formyl-L-kynurenine to L-kynurenine, the second step in the kynurenine pathway of tryptophan degradation. Kynurenine may be further oxidized to nicotinic acid, NAD(H) and NADP(H). Required for elimination of toxic metabolites. The chain is Kynurenine formamidase from Debaryomyces hansenii (strain ATCC 36239 / CBS 767 / BCRC 21394 / JCM 1990 / NBRC 0083 / IGC 2968) (Yeast).